The chain runs to 428 residues: Phosphoribosylamine--glycine ligase (428 aa).

The ATP-grasp domain occupies 107–313; it reads KQVMKTYNIP…LVNVIESLLD (207 aa). 133–194 contacts ATP; the sequence is VEAEGVPIVI…EEYLEGEELS (62 aa). Mg(2+)-binding residues include E283 and N285.

This sequence belongs to the GARS family. Requires Mg(2+) as cofactor. Mn(2+) serves as cofactor.

The enzyme catalyses 5-phospho-beta-D-ribosylamine + glycine + ATP = N(1)-(5-phospho-beta-D-ribosyl)glycinamide + ADP + phosphate + H(+). It functions in the pathway purine metabolism; IMP biosynthesis via de novo pathway; N(1)-(5-phospho-D-ribosyl)glycinamide from 5-phospho-alpha-D-ribose 1-diphosphate: step 2/2. In Halalkalibacterium halodurans (strain ATCC BAA-125 / DSM 18197 / FERM 7344 / JCM 9153 / C-125) (Bacillus halodurans), this protein is Phosphoribosylamine--glycine ligase.